The primary structure comprises 308 residues: UPF0282 protein YG5714_2245 (308 aa).

The protein belongs to the UPF0282 family.

The sequence is that of UPF0282 protein YG5714_2245 from Saccharolobus islandicus (strain Y.G.57.14 / Yellowstone #1) (Sulfolobus islandicus).